Consider the following 312-residue polypeptide: Malate dehydrogenase (312 aa).

NAD(+) contacts are provided by residues 7–13 (GAAGGIG) and aspartate 34. 2 residues coordinate substrate: arginine 81 and arginine 87. Residues asparagine 94 and 117 to 119 (ITN) each bind NAD(+). Substrate is bound by residues asparagine 119 and arginine 153. The active-site Proton acceptor is the histidine 177. Methionine 227 contributes to the NAD(+) binding site.

Belongs to the LDH/MDH superfamily. MDH type 1 family. In terms of assembly, homodimer.

It carries out the reaction (S)-malate + NAD(+) = oxaloacetate + NADH + H(+). Its function is as follows. Catalyzes the reversible oxidation of malate to oxaloacetate. This chain is Malate dehydrogenase, found in Photobacterium profundum (strain SS9).